A 195-amino-acid polypeptide reads, in one-letter code: Large ribosomal subunit protein eL15 (195 aa).

The tract at residues 174–195 (GHGRLGSAKSRPSIRANGRLRR) is disordered.

It belongs to the eukaryotic ribosomal protein eL15 family.

The polypeptide is Large ribosomal subunit protein eL15 (Picrophilus torridus (strain ATCC 700027 / DSM 9790 / JCM 10055 / NBRC 100828 / KAW 2/3)).